The following is a 580-amino-acid chain: MRTYAIRPVSNRLPGPIEPKKHRRDRDNSTTGSLYNALIHPVQGEKTITSTMIRVAEFQPFLNTISVLQVLAAIFIGALTYRLIDAFFLSPLRSIPGPLLARLTTKRANVDTFSGKVTQTVDKDVARYGDVYVYKPRAVCINHPDDIRAVLGSQEFRKAAFFDIFNDGNTPNIVSLREPELANRRRRQLGPFFNYAYLGRAEPLILQHGYQAIRTKWDALIQANSGRPTEVNYRTDTQLVTFDIMSALAFGRNFNAISRGSSSIMKWAGLIMEMLESPAVLALLSLLPFSLIMRPWKIMYRELAAFSSDAVDMRKQLLAEDSTEKPLDMLQAFIDAEDPESKIKMSPHEVQAESIMMMLAGSETTSSAIMWTFHLLLLYPETLRRAVHEVRSAFSLNHLVTYKDVRSSLPYVEACVYEALRHSPTTAGLTPRISHSTGITLQGYYIPPGTEIYVNLRSPSMHPSLWDDPARFNPDRFLDSDNNKRLLFTFSYGPRNCLGRNLAWVEMLTIVANVLKDYDIALTEDSLFGPHCTDENGLPVLMPAKCFIASFPAKPERDCRMVITRRMAGVKACAREYSPC.

The tract at residues 1–32 (MRTYAIRPVSNRLPGPIEPKKHRRDRDNSTTG) is disordered. An N-linked (GlcNAc...) asparagine glycan is attached at Asn28. A helical transmembrane segment spans residues 61–81 (FLNTISVLQVLAAIFIGALTY). Cys497 is a binding site for heme.

Belongs to the cytochrome P450 family. Heme serves as cofactor.

The protein localises to the membrane. It participates in mycotoxin biosynthesis. Its function is as follows. Cytochrome P450 monooxygenase; part of the gene cluster that mediates the biosynthesis of helvolic acid, an antibacterial nortriterpenoid. Protostadienol synthase helA cyclizes (3S)-oxidosqualene to (17Z)-protosta-17(20),24-dien-3-beta-ol (protostadienol). The synthesis of protostadienol is followed by several steps of monooxygenation, dehydrogenation, and acyl transfer to yield the final helvolic acid. Following the cyclization to the tetracyclic protostadienol by helA, cytochrome P450 monooxygenases helB1-mediated and helB2-mediated oxidation at C-4 and C-16, acyltransferase helD2-dependent acetylation of 16-OH, oxidation of C-21 by cytochrome P450 monooxygenase helB4, and short chain dehydrogenase helC-dependent oxidative decarboxylation yield the fusidane skeleton. This intermediate is further modified in three additional steps mediated by the cytochrome P450 monooxygenase helB3, the acyltransferase helD1, and the 3-ketosteroid 1-dehydrogenase helE to give helvolic acid. Compared with the late stages in the biosynthesis of helvolic acid, enzymes involved in the early stage modifications act in a relatively strict order. The hydroxylation of C-16 by helB1 and subsequent acetylation by helD2 should occur before the helB3-mediated oxidation of C-21. C-4 demethylation in fusidane-type antibiotics proceeds in an unusual manner though it is also achieved by oxidative decarboxylation. The methyl group at C-4 beta position is oxidized by helB1 and subsequently removed by the short chain dehydrogenase helC. The sequence is that of Cytochrome P450 monooxygenase helB1 from Aspergillus fumigatus (strain ATCC MYA-4609 / CBS 101355 / FGSC A1100 / Af293) (Neosartorya fumigata).